A 42-amino-acid chain; its full sequence is Photosystem I reaction center subunit IX (42 aa).

Residues 7–27 (YLSTAPVLATLWFGFLAGLLI) form a helical membrane-spanning segment.

Belongs to the PsaJ family.

It localises to the plastid. It is found in the chloroplast thylakoid membrane. May help in the organization of the PsaE and PsaF subunits. This is Photosystem I reaction center subunit IX from Marchantia polymorpha (Common liverwort).